Reading from the N-terminus, the 119-residue chain is Large ribosomal subunit protein eL31z (119 aa).

It belongs to the eukaryotic ribosomal protein eL31 family.

In Arabidopsis thaliana (Mouse-ear cress), this protein is Large ribosomal subunit protein eL31z (RPL31A).